Consider the following 443-residue polypeptide: Histidinol dehydrogenase (443 aa).

NAD(+) is bound by residues tyrosine 133, glutamine 191, and asparagine 214. Positions 240, 262, and 265 each coordinate substrate. Residues glutamine 262 and histidine 265 each contribute to the Zn(2+) site. Active-site proton acceptor residues include glutamate 329 and histidine 330. Positions 330, 363, 417, and 422 each coordinate substrate. Aspartate 363 lines the Zn(2+) pocket. Histidine 422 provides a ligand contact to Zn(2+).

The protein belongs to the histidinol dehydrogenase family. In terms of assembly, homodimer. Zn(2+) is required as a cofactor.

The enzyme catalyses L-histidinol + 2 NAD(+) + H2O = L-histidine + 2 NADH + 3 H(+). It participates in amino-acid biosynthesis; L-histidine biosynthesis; L-histidine from 5-phospho-alpha-D-ribose 1-diphosphate: step 9/9. Catalyzes the sequential NAD-dependent oxidations of L-histidinol to L-histidinaldehyde and then to L-histidine. This Blochmanniella pennsylvanica (strain BPEN) protein is Histidinol dehydrogenase.